The sequence spans 493 residues: Galactose-1-phosphate uridylyltransferase (493 aa).

The protein belongs to the galactose-1-phosphate uridylyltransferase type 2 family.

Its subcellular location is the cytoplasm. It carries out the reaction alpha-D-galactose 1-phosphate + UDP-alpha-D-glucose = alpha-D-glucose 1-phosphate + UDP-alpha-D-galactose. It participates in carbohydrate metabolism; galactose metabolism. In Streptococcus thermophilus (strain CNRZ 1066), this protein is Galactose-1-phosphate uridylyltransferase.